The primary structure comprises 394 residues: Myb-like protein R (394 aa).

2 helical membrane passes run I11–I31 and F99–F119. Positions G325–Q377 constitute a Myb-like domain.

The protein localises to the membrane. This chain is Myb-like protein R (mybR), found in Dictyostelium discoideum (Social amoeba).